A 197-amino-acid chain; its full sequence is Peptidoglycan-recognition protein 1 (197 aa).

A signal peptide spans 1 to 23 (MKLATITFFLLTEIFFYISYAEA). Cystine bridges form between Cys-31–Cys-154 and Cys-68–Cys-74. In terms of domain architecture, N-acetylmuramoyl-L-alanine amidase spans 53-180 (KPLERVVIHH…RNVKATKSPG (128 aa)).

This sequence belongs to the N-acetylmuramoyl-L-alanine amidase 2 family. Localizes to plasma (at protein level).

It localises to the secreted. Its function is as follows. Peptidoglycan-recognition protein probably involved in innate immunity by binding to peptidoglycans (PGN) of bacteria and activating the prophenoloxidase (proPO) cascade immune response. Binds to 1,3-beta-D-glucan and PGN. The protein is Peptidoglycan-recognition protein 1 (PGRP-1) of Holotrichia diomphalia (Korean black chafer).